We begin with the raw amino-acid sequence, 139 residues long: Actin-depolymerizing factor 1 (139 aa).

Residues 5–139 enclose the ADF-H domain; sequence ASGMAVHDDC…GLDVIQSRAN (135 aa).

The protein belongs to the actin-binding proteins ADF family.

Its function is as follows. Actin-depolymerizing protein. Severs actin filaments (F-actin) and binds to actin monomers. This Petunia hybrida (Petunia) protein is Actin-depolymerizing factor 1 (ADF1).